A 78-amino-acid chain; its full sequence is MSFVPVNPKPFLQGLIGKPVLVRLKWGQEYKGTLQSVDSYMNLQLLNAEELVDGVKTGDLGEILIRCNNVLWVGESTV.

The Sm domain maps to 7–78; it reads NPKPFLQGLI…NVLWVGESTV (72 aa).

Belongs to the snRNP Sm proteins family. SmF/LSm6 subfamily. As to quaternary structure, belongs to the 40S cdc5-associated complex (or cwf complex), a spliceosome sub-complex reminiscent of a late-stage spliceosome composed of the U2, U5 and U6 snRNAs and at least brr2, cdc5, cwf2/prp3, cwf3/syf1, cwf4/syf3, cwf5/ecm2, spp42/cwf6, cwf7/spf27, cwf8, cwf9, cwf10, cwf11, cwf12, prp45/cwf13, cwf14, cwf15, cwf16, cwf17, cwf18, cwf19, cwf20, cwf21, cwf22, cwf23, cwf24, cwf25, cwf26, cyp7/cwf27, cwf28, cwf29/ist3, lea1, msl1, prp5/cwf1, prp10, prp12/sap130, prp17, prp22, sap61, sap62, sap114, sap145, slu7, smb1, smd1, smd3, smf1, smg1 and syf2.

It is found in the nucleus. Its subcellular location is the cytoplasm. In terms of biological role, plays a role in pre-mRNA splicing as a core component of the spliceosomal U1, U2, U4 and U5 small nuclear ribonucleoproteins (snRNPs), the building blocks of the spliceosome. The chain is Small nuclear ribonucleoprotein F (smf1) from Schizosaccharomyces pombe (strain 972 / ATCC 24843) (Fission yeast).